The primary structure comprises 426 residues: S-adenosylmethionine synthase (426 aa).

Histidine 22 contacts ATP. Aspartate 24 lines the Mg(2+) pocket. K(+) is bound at residue glutamate 50. The L-methionine site is built by glutamate 63 and glutamine 106. The segment at 106 to 116 (QSPDISQGVTA) is flexible loop. ATP contacts are provided by residues 181 to 183 (DGK), 257 to 258 (KF), aspartate 266, 272 to 273 (RK), alanine 289, and lysine 293. Aspartate 266 is a binding site for L-methionine. Lysine 297 contacts L-methionine.

It belongs to the AdoMet synthase family. As to quaternary structure, homotetramer; dimer of dimers. Mg(2+) serves as cofactor. Requires K(+) as cofactor.

It localises to the cytoplasm. The enzyme catalyses L-methionine + ATP + H2O = S-adenosyl-L-methionine + phosphate + diphosphate. It functions in the pathway amino-acid biosynthesis; S-adenosyl-L-methionine biosynthesis; S-adenosyl-L-methionine from L-methionine: step 1/1. Its function is as follows. Catalyzes the formation of S-adenosylmethionine (AdoMet) from methionine and ATP. The overall synthetic reaction is composed of two sequential steps, AdoMet formation and the subsequent tripolyphosphate hydrolysis which occurs prior to release of AdoMet from the enzyme. The chain is S-adenosylmethionine synthase from Synechocystis sp. (strain ATCC 27184 / PCC 6803 / Kazusa).